A 403-amino-acid polypeptide reads, in one-letter code: Argininosuccinate synthase (403 aa).

An ATP-binding site is contributed by alanine 8–serine 16. An L-citrulline-binding site is contributed by tyrosine 87. Glycine 117 contacts ATP. L-aspartate contacts are provided by threonine 119, asparagine 123, and aspartate 124. Asparagine 123 serves as a coordination point for L-citrulline. Residues arginine 127, serine 175, glutamate 259, and tyrosine 271 each contribute to the L-citrulline site.

It belongs to the argininosuccinate synthase family. Type 1 subfamily. In terms of assembly, homotetramer.

It is found in the cytoplasm. The enzyme catalyses L-citrulline + L-aspartate + ATP = 2-(N(omega)-L-arginino)succinate + AMP + diphosphate + H(+). It participates in amino-acid biosynthesis; L-arginine biosynthesis; L-arginine from L-ornithine and carbamoyl phosphate: step 2/3. This chain is Argininosuccinate synthase, found in Salinispora arenicola (strain CNS-205).